The sequence spans 263 residues: Chymotrypsinogen B (263 aa).

An N-terminal signal peptide occupies residues 1–18 (MAFLWLVSCFALVGATFG). Intrachain disulfides connect cysteine 19–cysteine 140, cysteine 60–cysteine 76, cysteine 154–cysteine 219, cysteine 186–cysteine 200, and cysteine 209–cysteine 238. A Peptidase S1 domain is found at 34–261 (IVNGEDAIPG…LMPWVQQILE (228 aa)). Histidine 75 acts as the Charge relay system in catalysis. Serine 93 is modified (phosphoserine). Catalysis depends on aspartate 120, which acts as the Charge relay system. The active-site Charge relay system is serine 213.

It belongs to the peptidase S1 family.

It is found in the secreted. It localises to the extracellular space. The catalysed reaction is Preferential cleavage: Tyr-|-Xaa, Trp-|-Xaa, Phe-|-Xaa, Leu-|-Xaa.. The protein is Chymotrypsinogen B (Ctrb1) of Rattus norvegicus (Rat).